The sequence spans 278 residues: MKFGVIGAGQMGGGIAQVAAQSGFDVVVHDQKQEFLDRGKGVIEKSLGKLHEKGKLTDAPETVLGRIHFTTDLQDFADCDLVVEAIVENQQIKNDLFKQLGQIVKPEGILASNTSSIPITALATASGRPAQFIGMHFMNPVPLMQLVEVIRGYQTSDETARIVTETAEKLGKTPLSCNDFPGFVSNRILMPMLNEAIQCVMEGVAEPEAIDGIMKLGMNHPMGPLTLADFIGLDTCLAIMEVLHQGLGDDKYRPSPLLRKMVQAGLLGRKSGEGFYKY.

The protein belongs to the 3-hydroxyacyl-CoA dehydrogenase family.

It carries out the reaction (3S)-3-hydroxybutanoyl-CoA + NADP(+) = acetoacetyl-CoA + NADPH + H(+). It participates in lipid metabolism; butanoate metabolism. The polypeptide is Probable 3-hydroxybutyryl-CoA dehydrogenase (hbd) (Deinococcus radiodurans (strain ATCC 13939 / DSM 20539 / JCM 16871 / CCUG 27074 / LMG 4051 / NBRC 15346 / NCIMB 9279 / VKM B-1422 / R1)).